The primary structure comprises 52 residues: UPF0181 protein VPA0916 (52 aa).

It belongs to the UPF0181 family.

This is UPF0181 protein VPA0916 from Vibrio parahaemolyticus serotype O3:K6 (strain RIMD 2210633).